Reading from the N-terminus, the 653-residue chain is Alpha-L-iduronidase (653 aa).

The signal sequence occupies residues 1-27 (MRPLRPRAALLALLASLLAAPPVAPAE). Residues P54, L56, and H58 each contribute to the alpha-D-mannopyranose site. H91 is a binding site for alpha-L-iduronate. A glycan (N-linked (GlcNAc...) asparagine) is linked at N110. Alpha-L-iduronate is bound by residues N181 and E182. The active-site Proton donor is the E182. N-linked (GlcNAc...) asparagine glycosylation occurs at N190. Alpha-L-iduronate-binding residues include K264, E299, and G305. The active-site Nucleophile is the E299. Position 306 (W306) interacts with alpha-D-mannopyranose. The N-linked (GlcNAc...) asparagine glycan is linked to N336. Alpha-L-iduronate is bound by residues D349 and R363. N-linked (GlcNAc...) asparagine glycosylation is found at N372, N415, and N451. Alpha-D-mannopyranose contacts are provided by R488 and R492. Beta-D-mannose is bound at residue R492. Residues C541 and C577 are joined by a disulfide bond.

Belongs to the glycosyl hydrolase 39 family. As to quaternary structure, monomer. N-glycosylation at Asn-372 contributes to substrate binding and is required for full enzymatic activity. Ubiquitous.

The protein localises to the lysosome. It carries out the reaction Hydrolysis of unsulfated alpha-L-iduronosidic linkages in dermatan sulfate.. The chain is Alpha-L-iduronidase (IDUA) from Homo sapiens (Human).